Reading from the N-terminus, the 220-residue chain is Fructose-6-phosphate aldolase (220 aa).

The active-site Schiff-base intermediate with substrate is Lys85.

This sequence belongs to the transaldolase family. Type 3A subfamily. Homodecamer.

It localises to the cytoplasm. It catalyses the reaction beta-D-fructose 6-phosphate = dihydroxyacetone + D-glyceraldehyde 3-phosphate. In terms of biological role, catalyzes the reversible formation of fructose 6-phosphate from dihydroxyacetone and D-glyceraldehyde 3-phosphate via an aldolization reaction. In Salmonella schwarzengrund (strain CVM19633), this protein is Fructose-6-phosphate aldolase.